Consider the following 993-residue polypeptide: MIKSSFKAQPFLVRNTILCPNDKRSFTEYTQVIETVSKNKVFLEQLLLANPKLYDVMQKYNAGLLKKKRVKKLFESIYKYYKRSYLRSTPFGLFSETSIGVFSKSSQYKLMGKTTKGIRLDTQWLIRLVHKMEVDFSKKLSFTRNNANYKFGDRVFQVYTINSSELEEVNIKYTNVYQIISEFCENDYQKYEDICETVTLCYGDEYRELSEQYLGSLIVNHYLISNLQKDLLSDFSWNTFLTKVEAIDEDKKYIIPLKKVQKFIQEYSEIEIGEGIEKLKEIYQEMSQILENDNYIQIDLISDSEINFDVKQKQQLEHLAEFLGNTTKSVRRTYLDDYKDKFIEKYGVDQEVQITELFDSTFGIGAPYNYNHPRNDFYESEPSTLYYSEEEREKYLSMYVEAVKNHNVINLDDLESHYQKMDLEKKSELQGLELFLNLAKEYEKDIFILGDIVGNNNLGGASGRFSALSPELTSYHRTIVDSVERENENKEITSCEIVFLPENIRHANVMHTSIMRRKVLPFFTSTSHNEVLLTNIYIGIDEKEKFYARDISTQEVLKFYITSMYNKTLFSNELRFLYEISLDDKFGNLPWELIYRDFDYIPRLVFDEIVISPAKWKIWGRDVNSKMTIRELIQSKEIPKEFYIVNGDNKVYLSQKNPLDMEILESAIKKSSKRKDFIELQEYFEDENIINKGEKGRVADVVVPFIRTRALGNEGRAFIREKRVSVERREKLPFNEWLYLKLYISINRQNEFLLSYLPDIQKIVANLGGNLFFLRYTDPKPHIRLRIKCSDLFLAYGSILEILKRSRKNRIMSTFDISIYDQEVERYGGFDTLELSEAIFCADSKIIPNLLTLIKDTNNDWKVDDVSILVNYLYLKCFFQNDNKKILNFLNLVSTKKVKENVNEKIEHYLKLLKVNNLGDQIFYDKNFKELKHAIKNLFLKMIAQDFELQKVYSIIDSIIHVHNNRLIGIERDKEKLIYYTLQRLFVSEEYMK.

The helical transmembrane segment at 838–851 (AIFCADSKIIPNLL) threads the bilayer.

The protein to B.subtilis SpaB and S.epidermidis EpiB.

The protein localises to the cell membrane. Functionally, involved in the post-translational modification of the lantibiotic nisin. The chain is Nisin biosynthesis protein NisB (nisB) from Lactococcus lactis subsp. lactis (Streptococcus lactis).